Here is a 927-residue protein sequence, read N- to C-terminus: MGTQDPGNMGTGVPASEQISCAKEDPQVYCPEETGGTKDVQVTDCKSPEDSRPPKETDCCNPEDSGQLMVSYEGKAMGYQVPPFGWRICLAHEFTEKRKPFQANNVSLSNMIKHIGMGLRYLQWWYRKTHVEKKTPFIDMINSVPLRQIYGCPLGGIGGGTITRGWRGQFCRWQLNPGMYQHRTVIADQFTVCLRREGQTVYQQVLSLERPSVLRSWNWGLCGYFAFYHALYPRAWTVYQLPGQNVTLTCRQITPILPHDYQDSSLPVGVFVWDVENEGDEALDVSIMFSMRNGLGGGDDAPGGLWNEPFCLERSGETVRGLLLHHPTLPNPYTMAVAARVTAATTVTHITAFDPDSTGQQVWQDLLQDGQLDSPTGQSTPTQKGVGIAGAVCVSSKLRPRGQCRLEFSLAWDMPRIMFGAKGQVHYRRYTRFFGQDGDAAPALSHYALCRYAEWEERISAWQSPVLDDRSLPAWYKSALFNELYFLADGGTVWLEVLEDSLPEELGRNMCHLRPTLRDYGRFGYLEGQEYRMYNTYDVHFYASFALIMLWPKLELSLQYDMALATLREDLTRRRYLMSGVMAPVKRRNVIPHDIGDPDDEPWLRVNAYLIHDTADWKDLNLKFVLQVYRDYYLTGDQNFLKDMWPVCLAVMESEMKFDKDHDGLIENGGYADQTYDGWVTTGPSAYCGGLWLAAVAVMVQMAALCGAQDIQDKFSSILSRGQEAYERLLWNGRYYNYDSSSRPQSRSVMSDQCAGQWFLKACGLGEGDTEVFPTQHVVRALQTIFELNVQAFAGGAMGAVNGMQPHGVPDKSSVQSDEVWVGVVYGLAATMIQEGLTWEGFQTAEGCYRTVWERLGLAFQTPEAYCQQRVFRSLAYMRPLSIWAMQLALQQQQHKKASWPKVKQGTGLRTGPMFGPKEAMANLSPE.

The tract at residues 32–62 (EETGGTKDVQVTDCKSPEDSRPPKETDCCNP) is disordered. Over residues 46-58 (KSPEDSRPPKETD) the composition is skewed to basic and acidic residues.

Belongs to the non-lysosomal glucosylceramidase family. Widely expressed. Mainly expressed in brain, heart, skeletal muscle, kidney and placenta and expressed at lower levels in liver, spleen, small intestine and lung. Detectable in colon, thymus and peripheral blood leukocytes.

It is found in the endoplasmic reticulum membrane. The protein localises to the golgi apparatus membrane. It carries out the reaction a beta-D-glucosyl-(1&lt;-&gt;1')-N-acylsphing-4-enine + H2O = an N-acylsphing-4-enine + D-glucose. It catalyses the reaction a beta-D-galactosyl-(1&lt;-&gt;1')-N-acylsphing-4-enine + H2O = an N-acylsphing-4-enine + D-galactose. The catalysed reaction is beta-D-glucosyl-(1-&gt;3)-O-lithocholate + H2O = lithocholate + D-glucose. The enzyme catalyses beta-D-glucosyl-(1-&gt;3)-O-chenodeoxycholate + H2O = chenodeoxycholate + D-glucose. It carries out the reaction a di-trans,poly-cis-dolichyl beta-D-glucosyl phosphate + chenodeoxycholate = beta-D-glucosyl-(1-&gt;3)-O-chenodeoxycholate + a di-trans,poly-cis-dolichyl phosphate + H(+). It catalyses the reaction octyl beta-D-glucose + chenodeoxycholate = beta-D-glucosyl-(1-&gt;3)-O-chenodeoxycholate + octan-1-ol. The catalysed reaction is cholesteryl 3-beta-D-glucoside + H2O = cholesterol + D-glucose. The enzyme catalyses a beta-D-glucosyl-(1&lt;-&gt;1')-N-acylsphing-4-enine + cholesterol = cholesteryl 3-beta-D-glucoside + an N-acylsphing-4-enine. It carries out the reaction beta-D-glucosyl-N-(9Z-octadecenoyl)-sphing-4E-enine + cholesterol = N-(9Z-octadecenoyl)-sphing-4-enine + cholesteryl 3-beta-D-glucoside. It catalyses the reaction a beta-D-galactosyl-(1&lt;-&gt;1')-N-acylsphing-4-enine + cholesterol = cholesteryl 3-beta-D-galactoside + an N-acylsphing-4-enine. The catalysed reaction is 1-(beta-D-galactosyl)-N-dodecanoylsphing-4-enine + cholesterol = cholesteryl 3-beta-D-galactoside + N-dodecanoylsphing-4-enine. It participates in lipid metabolism; sphingolipid metabolism. Its pathway is steroid metabolism; cholesterol metabolism. Its activity is regulated as follows. Inhibited by AMP-DMN/N -((5-adamantane-1-yl-methoxy)pentyl)-deoxynojirimycin. Activated by Mn(2+), Co(2+) and Mg(2+) and inhibited by Zn(2+). Enzymatic activity is dependent on membrane association and requires the presence of lipids. The membrane-associated enzyme is not inhibited by condutiriol B epoxide and bromocondutiriol B epoxide. In terms of biological role, non-lysosomal glucosylceramidase that catalyzes the hydrolysis of glucosylceramides/GlcCers (such as beta-D-glucosyl-(1&lt;-&gt;1')-N-acylsphing-4-enine) to free glucose and ceramides (such as N-acylsphing-4-enine). GlcCers are membrane glycosphingolipids that have a wide intracellular distribution. They are the main precursors of more complex glycosphingolipids that play a role in cellular growth, differentiation, adhesion, signaling, cytoskeletal dynamics and membrane properties. Involved in the transglucosylation of cholesterol, transfers glucose from GlcCer to cholesterol, thereby modifying its water solubility and biological properties. Under specific conditions, may catalyze the reverse reaction, transferring glucose from cholesteryl-3-beta-D-glucoside to ceramide (such as N-acylsphing-4-enine). May play a role in the metabolism of bile acids. Able to hydrolyze bile acid 3-O-glucosides as well as to produce bile acid-glucose conjugates thanks to a bile acid glucosyl transferase activity. Catalyzes the hydrolysis of galactosylceramides/GalCers (such as beta-D-galactosyl-(1&lt;-&gt;1')-N-acylsphing-4-enine), as well as the galactosyl transfer between GalCers and cholesterol in vitro with lower activity compared with their activity against GlcCers. The chain is Non-lysosomal glucosylceramidase from Homo sapiens (Human).